Here is a 302-residue protein sequence, read N- to C-terminus: tRNA dimethylallyltransferase (302 aa).

Gly7–Ser14 contacts ATP. Substrate is bound at residue Thr9–Ser14. Interaction with substrate tRNA stretches follow at residues Asp32–Gln35 and Gln156–Arg160.

The protein belongs to the IPP transferase family. In terms of assembly, monomer. It depends on Mg(2+) as a cofactor.

The enzyme catalyses adenosine(37) in tRNA + dimethylallyl diphosphate = N(6)-dimethylallyladenosine(37) in tRNA + diphosphate. Its function is as follows. Catalyzes the transfer of a dimethylallyl group onto the adenine at position 37 in tRNAs that read codons beginning with uridine, leading to the formation of N6-(dimethylallyl)adenosine (i(6)A). The polypeptide is tRNA dimethylallyltransferase (Beijerinckia indica subsp. indica (strain ATCC 9039 / DSM 1715 / NCIMB 8712)).